The chain runs to 96 residues: Growth-regulated alpha protein (96 aa).

Residues 1-24 (MVSATRSLLCAALPVLATSRQATG) form the signal peptide. Intrachain disulfides connect Cys-33–Cys-59 and Cys-35–Cys-75.

It belongs to the intercrine alpha (chemokine CxC) family. As to quaternary structure, monomer and homodimer. As to expression, at least expressed in the lung and trachea.

It localises to the secreted. Functionally, has chemotactic activity for neutrophils. Contributes to neutrophil activation during inflammation. The sequence is that of Growth-regulated alpha protein (Cxcl1) from Rattus norvegicus (Rat).